The sequence spans 564 residues: Bifunctional protein CrtB/UppS (564 aa).

The active site involves Asp-329. Asp-329 contributes to the Mg(2+) binding site. Residues 330-333, Trp-334, His-346, and 374-376 contribute to the substrate site; these read GNRR and STE. Residue Asn-377 is the Proton acceptor of the active site. Substrate is bound by residues Trp-378, Arg-380, Arg-497, and 502–504; that span reads RIS. Glu-515 lines the Mg(2+) pocket.

The protein in the N-terminal section; belongs to the phytoene/squalene synthase family. It in the C-terminal section; belongs to the UPP synthase family. In terms of assembly, homodimer. Mg(2+) serves as cofactor.

It catalyses the reaction 2 (2E,6E,10E)-geranylgeranyl diphosphate = 15-cis-phytoene + 2 diphosphate. It participates in carotenoid biosynthesis; phytoene biosynthesis; all-trans-phytoene from geranylgeranyl diphosphate: step 1/1. Catalyzes the reaction from prephytoene diphosphate to phytoene. Its function is as follows. Catalyzes the condensation of isopentenyl diphosphate (IPP) with allylic pyrophosphates generating different type of terpenoids. The chain is Bifunctional protein CrtB/UppS (crtB/uppS3) from Streptomyces coelicolor (strain ATCC BAA-471 / A3(2) / M145).